A 678-amino-acid polypeptide reads, in one-letter code: Endoplasmic reticulum membrane-associated RNA degradation protein (678 aa).

Helical transmembrane passes span 390 to 410 (LLAF…LSVF) and 587 to 607 (VLSL…AVCG).

The protein resides in the endoplasmic reticulum membrane. In terms of biological role, may play a role in neuronal migration during embryonic development. The polypeptide is Endoplasmic reticulum membrane-associated RNA degradation protein (ERMARD) (Homo sapiens (Human)).